The primary structure comprises 107 residues: Glutaredoxin 4 (107 aa).

Residues 4–106 (LDKIKKQISE…TLLAEVAAKH (103 aa)) enclose the Glutaredoxin domain. Position 21 (K21) interacts with glutathione. Residue C29 participates in [2Fe-2S] cluster binding. Glutathione is bound by residues R58, F70, and 83-84 (CD).

It belongs to the glutaredoxin family. Monothiol subfamily. Homodimer.

The protein resides in the cytoplasm. Its function is as follows. Monothiol glutaredoxin involved in the biogenesis of iron-sulfur clusters. The polypeptide is Glutaredoxin 4 (grxD) (Haemophilus influenzae (strain 86-028NP)).